A 337-amino-acid polypeptide reads, in one-letter code: Phenylalanine--tRNA ligase alpha subunit (337 aa).

Position 258 (Glu-258) interacts with Mg(2+).

The protein belongs to the class-II aminoacyl-tRNA synthetase family. Phe-tRNA synthetase alpha subunit type 1 subfamily. As to quaternary structure, tetramer of two alpha and two beta subunits. Mg(2+) is required as a cofactor.

The protein localises to the cytoplasm. It catalyses the reaction tRNA(Phe) + L-phenylalanine + ATP = L-phenylalanyl-tRNA(Phe) + AMP + diphosphate + H(+). The sequence is that of Phenylalanine--tRNA ligase alpha subunit from Burkholderia cenocepacia (strain ATCC BAA-245 / DSM 16553 / LMG 16656 / NCTC 13227 / J2315 / CF5610) (Burkholderia cepacia (strain J2315)).